The primary structure comprises 38 residues: ECRYFWGECNDEMVCCEHLVCKEKWPITYKICVWDRTF.

Intrachain disulfides connect Cys-2–Cys-16, Cys-9–Cys-21, and Cys-15–Cys-32. Position 38 is a phenylalanine amide (Phe-38).

The protein belongs to the neurotoxin 10 (Hwtx-1) family. 13 (Hntx-13) subfamily. As to expression, expressed by the venom gland.

The protein resides in the secreted. Its function is as follows. Inhibitor of voltage-gated potassium channels. It specifically inhibits Kv2.1/KCNB1 channels. The protein is Kappa-theraphotoxin-Hm2a of Heteroscodra maculata (Togo starburst tarantula).